A 3994-amino-acid polypeptide reads, in one-letter code: Hybrid PKS-NRPs synthetase opdA (3994 aa).

A Ketosynthase family 3 (KS3) domain is found at 6–442 (PEPIAIVGSS…GTNSHVILES (437 aa)). Residues Cys179, His316, and His362 each act as for beta-ketoacyl synthase activity in the active site. Residues 559–881 (VFTGQGAQWP…LKRDSNDVEA (323 aa)) form a malonyl-CoA:ACP transacylase (MAT) domain region. The segment at 951-1085 (HELLGRRTHD…GRLIIHLGET (135 aa)) is N-terminal hotdog fold. The interval 951–1251 (HELLGRRTHD…SVKPMAPPTA (301 aa)) is dehydratase (DH) domain. The PKS/mFAS DH domain occupies 951-1252 (HELLGRRTHD…VKPMAPPTAE (302 aa)). The Proton acceptor; for dehydratase activity role is filled by His983. The C-terminal hotdog fold stretch occupies residues 1100–1252 (LLSVDTDEGY…VKPMAPPTAE (153 aa)). Asp1159 acts as the Proton donor; for dehydratase activity in catalysis. The segment at 1292–1593 (DRVVLYYVQR…VDLAFHDLPD (302 aa)) is methyltransferase (MT) domain. The ketoreductase (KR) domain stretch occupies residues 2123–2297 (TYLMVGMAGG…ASIIHIGFVT (175 aa)). Residues 2406 to 2483 (EAVEITQKAF…QICTNAAKQL (78 aa)) form the Carrier 1 domain. Position 2443 is an O-(pantetheine 4'-phosphoryl)serine (Ser2443). Residues 2486 to 2575 (QKGGQEPSEQ…FDPDDRDYNP (90 aa)) are disordered. Composition is skewed to polar residues over residues 2505 to 2514 (LHVSQGSLHT) and 2522 to 2546 (TETSSVGGTENTPLTSASSSPSVTD). A compositionally biased stretch (basic and acidic residues) spans 2547–2556 (TVEKRDKGDI). Residues 2557 to 2570 (SVDEGPNEQFDPDD) are compositionally biased toward acidic residues. The segment at 2582–3007 (RLSSGQSRIY…SNTYMTVAKI (426 aa)) is condensation (C) domain. The segment at 3043 to 3436 (HETNREDLAI…DGSLVFLGRL (394 aa)) is adenylation (A) (KR) domain. One can recognise a Carrier 2 domain in the interval 3553 to 3630 (PKLSLRQSEL…KMTMLVDLER (78 aa)). Ser3590 carries the post-translational modification O-(pantetheine 4'-phosphoryl)serine. Residues 3679 to 3895 (TGATGFLGGS…FDFKKVEEVA (217 aa)) form a reductase (RED) domain region.

It in the C-terminal section; belongs to the NRP synthetase family. Requires pantetheine 4'-phosphate as cofactor.

It participates in secondary metabolite biosynthesis. In terms of biological role, hybrid PKS-NRPS synthetase; part of the gene cluster that mediates the biosynthesis of oxopyrrolidines, polyketide-amino acid hybrid compounds with feature structures of tetramic acid. The polyketide chain is first assembled by the highly reducing PKS module of opdA using acetyl-CoA as the starter unit and five malonyl-CoA as the extender units. OpdC acts as trans-acting enoyl reductase and reduces the terminal alkenyl to alkane. The 17R in oxopyrrolidine A and 15R, 17S in oxopyrrolidine B are generated by non-stereospecific catalysis of the ketoreductase (KR) domain and enoyl reductases. Then the polyketides with specific configurations are transferred to the NRPS module of opdA and linked to L-tyrosine to form an amide bond. Finally, the oxopyrrolidines are offloaded through a Dieckmann cyclization catalyzed by the terminal D domain to give a tetramic acid moiety. This is Hybrid PKS-NRPs synthetase opdA from Penicillium oxalicum (strain 114-2 / CGMCC 5302) (Penicillium decumbens).